A 216-amino-acid chain; its full sequence is Vascular endothelial growth factor A (216 aa).

Positions 1–26 are cleaved as a signal peptide; that stretch reads MNFLLTWIHWGLAALLYLQSAELSKA. 3 disulfides stabilise this stretch: Cys52/Cys94, Cys83/Cys128, and Cys87/Cys130. The N-linked (GlcNAc...) asparagine glycan is linked to Asn101. The segment covering 132–141 has biased composition (basic and acidic residues); the sequence is PKKDVKNKQE. Residues 132–167 are disordered; sequence PKKDVKNKQEKKSKRGKGKGQKRKRKKGRYKPPSFH. Positions 142–161 are enriched in basic residues; the sequence is KKSKRGKGKGQKRKRKKGRY.

This sequence belongs to the PDGF/VEGF growth factor family. In terms of assembly, homodimer; disulfide-linked. Also found as heterodimer with PGF.

Its function is as follows. Growth factor active in angiogenesis, vasculogenesis and endothelial cell growth. Induces endothelial cell proliferation, promotes cell migration, inhibits apoptosis and induces permeabilization of blood vessels. Binds to the FLT1/VEGFR1 and KDR/VEGFR2 receptors, heparan sulfate and heparin. The protein is Vascular endothelial growth factor A (VEGFA) of Gallus gallus (Chicken).